A 356-amino-acid chain; its full sequence is uncharacterized protein (356 aa).

This is an uncharacterized protein from Bacillus subtilis (strain 168).